The primary structure comprises 205 residues: Glycerol-3-phosphate acyltransferase (205 aa).

Residues 1 to 3 (MSA) are Periplasmic-facing. A helical transmembrane segment spans residues 4–24 (IAPGMILFAYLCGSISSAILV). Residues 25–52 (CRIAGLPDPRESGSGNPGATNVLRIGGK) lie on the Cytoplasmic side of the membrane. A helical membrane pass occupies residues 53-73 (GAAVAVLIFDILKGMLPVWGA). The Periplasmic segment spans residues 74–80 (YALGITP). The helical transmembrane segment at 81 to 101 (FWLGLIAIAACLGHIWPVFFG) threads the bilayer. Residues 102 to 111 (FKGGKGVATA) are Cytoplasmic-facing. The helical transmembrane segment at 112 to 132 (FGAIAPIGWDLTGVIAGTWLL) threads the bilayer. Residues 133–137 (TVLLS) are Periplasmic-facing. Residues 138-158 (GYSSLGAIVSALIAPFYVWWF) traverse the membrane as a helical segment. Over 159–205 (KPQFTFPVSMLSCLILLRHHDNIQRLWRRQETKIWTKLKKKREKESK) the chain is Cytoplasmic.

Belongs to the PlsY family. Probably interacts with PlsX.

It is found in the cell inner membrane. It carries out the reaction sn-glycerol 3-phosphate + an acyl-CoA = a 1-acyl-sn-glycero-3-phosphate + CoA. It catalyses the reaction a fatty acyl-[ACP] + sn-glycerol 3-phosphate = a 1-acyl-sn-glycero-3-phosphate + holo-[ACP]. Its pathway is lipid metabolism; phospholipid metabolism. Its function is as follows. Catalyzes the transfer of an acyl group from acyl-ACP to glycerol-3-phosphate (G3P) to form lysophosphatidic acid (LPA). This enzyme can also utilize acyl-CoA as fatty acyl donor, but not acyl-PO(4). In Salmonella arizonae (strain ATCC BAA-731 / CDC346-86 / RSK2980), this protein is Glycerol-3-phosphate acyltransferase.